The chain runs to 384 residues: N-acetylneuraminate epimerase (384 aa).

The first 29 residues, 1-29 (MGMQMKNFKKMMTLMALCLSVAITTSGYA), serve as a signal peptide directing secretion. Kelch repeat units lie at residues 51–95 (VIYV…VFLN), 97–149 (KLYV…VKLN), 151–184 (TMVL…KVIY), 185–230 (NYFN…VMEN), 233–282 (LMLI…LAGA), 304–353 (QNYT…SYGD), and 355–384 (VFLI…LLIK). The Proton acceptor role is filled by Glu239.

The protein belongs to the NanM family. In terms of assembly, homodimer.

The protein localises to the periplasm. It carries out the reaction N-acetyl-alpha-neuraminate = N-acetyl-beta-neuraminate. In terms of biological role, converts alpha-N-acetylneuranimic acid (Neu5Ac) to the beta-anomer, accelerating the equilibrium between the alpha- and beta-anomers. Probably facilitates sialidase-negative bacteria to compete successfully for limited amounts of extracellular Neu5Ac, which is likely taken up in the beta-anomer. In addition, the rapid removal of sialic acid from solution might be advantageous to the bacterium to damp down host responses. In Salmonella typhi, this protein is N-acetylneuraminate epimerase.